We begin with the raw amino-acid sequence, 289 residues long: Bifunctional protein FolD (289 aa).

Residues 166 to 168 (GRS), Ser-191, and Ile-232 each bind NADP(+).

Belongs to the tetrahydrofolate dehydrogenase/cyclohydrolase family. As to quaternary structure, homodimer.

It carries out the reaction (6R)-5,10-methylene-5,6,7,8-tetrahydrofolate + NADP(+) = (6R)-5,10-methenyltetrahydrofolate + NADPH. The catalysed reaction is (6R)-5,10-methenyltetrahydrofolate + H2O = (6R)-10-formyltetrahydrofolate + H(+). Its pathway is one-carbon metabolism; tetrahydrofolate interconversion. Functionally, catalyzes the oxidation of 5,10-methylenetetrahydrofolate to 5,10-methenyltetrahydrofolate and then the hydrolysis of 5,10-methenyltetrahydrofolate to 10-formyltetrahydrofolate. This is Bifunctional protein FolD from Synechococcus sp. (strain JA-3-3Ab) (Cyanobacteria bacterium Yellowstone A-Prime).